The primary structure comprises 204 residues: Large ribosomal subunit protein eL15 (204 aa).

It belongs to the eukaryotic ribosomal protein eL15 family.

This Tetrahymena thermophila (strain SB210) protein is Large ribosomal subunit protein eL15 (RPL15).